Here is a 294-residue protein sequence, read N- to C-terminus: Probable endonuclease 4 (294 aa).

9 residues coordinate Zn(2+): His78, His118, Glu157, Asp191, His194, His228, Asp241, His243, and Glu273.

The protein belongs to the AP endonuclease 2 family. The cofactor is Zn(2+).

It catalyses the reaction Endonucleolytic cleavage to 5'-phosphooligonucleotide end-products.. Endonuclease IV plays a role in DNA repair. It cleaves phosphodiester bonds at apurinic or apyrimidinic (AP) sites, generating a 3'-hydroxyl group and a 5'-terminal sugar phosphate. The chain is Probable endonuclease 4 from Streptomyces coelicolor (strain ATCC BAA-471 / A3(2) / M145).